We begin with the raw amino-acid sequence, 36 residues long: Toxin Iob1 (36 aa).

Intrachain disulfides connect C6–C21, C13–C26, and C20–C33.

Its subcellular location is the secreted. Binds reversibly and blocks N-type voltage-gated calcium channels (Cav). In Isyndus obscurus (Assassin bug), this protein is Toxin Iob1.